The primary structure comprises 129 residues: Small ribosomal subunit protein uS11 (129 aa).

This sequence belongs to the universal ribosomal protein uS11 family. Part of the 30S ribosomal subunit.

In terms of biological role, located on the platform of the 30S subunit. The protein is Small ribosomal subunit protein uS11 of Methanocaldococcus jannaschii (strain ATCC 43067 / DSM 2661 / JAL-1 / JCM 10045 / NBRC 100440) (Methanococcus jannaschii).